A 103-amino-acid chain; its full sequence is Small ribosomal subunit protein uS10 (103 aa).

It belongs to the universal ribosomal protein uS10 family. Part of the 30S ribosomal subunit.

In terms of biological role, involved in the binding of tRNA to the ribosomes. The chain is Small ribosomal subunit protein uS10 from Psychrobacter sp. (strain PRwf-1).